Here is a 160-residue protein sequence, read N- to C-terminus: Serine-protein kinase RsbW (160 aa).

Belongs to the anti-sigma-factor family.

The catalysed reaction is L-seryl-[protein] + ATP = O-phospho-L-seryl-[protein] + ADP + H(+). It carries out the reaction L-threonyl-[protein] + ATP = O-phospho-L-threonyl-[protein] + ADP + H(+). Functionally, negative regulator of sigma-B activity. Phosphorylates and inactivates its specific antagonist protein, RsbV. Upon phosphorylation of RsbV, RsbW is released and binds to sigma-B, thereby blocking its ability to form an RNA polymerase holoenzyme (E-sigma-B). This chain is Serine-protein kinase RsbW, found in Bacillus cereus (strain G9842).